A 271-amino-acid polypeptide reads, in one-letter code: Protein PXR1 (271 aa).

The region spanning 25 to 72 (TSRFGHQFLEKFGWKPGMGLGLSPMNSNTSHIKVSIKDDNVGLGAKLK) is the G-patch domain. Positions 147 to 239 (SNAKKRKREG…SASNIPDAVN (93 aa)) are disordered. Residues 157–168 (DDSEDEDDDDKE) show a composition bias toward acidic residues. Over residues 175-203 (KKHKKHKKHKKDKKKDKKDKKEHKKHKKE) the composition is skewed to basic residues. The span at 204–221 (EKRLKKEKRAEKTKETKK) shows a compositional bias: basic and acidic residues. Ser230 carries the post-translational modification Phosphoserine.

It belongs to the PINX1 family. In terms of assembly, interacts with EST2.

Its subcellular location is the nucleus. It is found in the nucleolus. Functionally, involved in rRNA-processing at A0, A1 and A2 sites through its action in U18 and U24 snoRNA 3'-end final trimming. Negative regulator of telomerase through competition for binding to EST2 with TLC1. This chain is Protein PXR1 (PXR1), found in Saccharomyces cerevisiae (strain ATCC 204508 / S288c) (Baker's yeast).